Reading from the N-terminus, the 597-residue chain is Elongation factor 4 (597 aa).

The region spanning 2-184 is the tr-type G domain; the sequence is NNIRNFSIIA…SLITKVPPPK (183 aa). GTP-binding positions include 14 to 19 and 131 to 134; these read DHGKST and NKID.

The protein belongs to the TRAFAC class translation factor GTPase superfamily. Classic translation factor GTPase family. LepA subfamily.

The protein resides in the cell inner membrane. It carries out the reaction GTP + H2O = GDP + phosphate + H(+). In terms of biological role, required for accurate and efficient protein synthesis under certain stress conditions. May act as a fidelity factor of the translation reaction, by catalyzing a one-codon backward translocation of tRNAs on improperly translocated ribosomes. Back-translocation proceeds from a post-translocation (POST) complex to a pre-translocation (PRE) complex, thus giving elongation factor G a second chance to translocate the tRNAs correctly. Binds to ribosomes in a GTP-dependent manner. This is Elongation factor 4 from Janthinobacterium sp. (strain Marseille) (Minibacterium massiliensis).